A 543-amino-acid chain; its full sequence is Myotubularin-related protein 9-like (543 aa).

Residues 124–502 form the Myotubularin phosphatase domain; it reads AWHFHPPECY…QSLRLWQGLF (379 aa).

The protein belongs to the protein-tyrosine phosphatase family. Non-receptor class myotubularin subfamily.

In terms of biological role, probable pseudophosphatase. This is Myotubularin-related protein 9-like from Bos taurus (Bovine).